The following is a 142-amino-acid chain: Small ribosomal subunit protein uS12 (142 aa).

The segment at 1-44 (MANGKYAARKLKQDRQKHRWSDSDYARRARGLGKKSDPLEGAPQ) is disordered. Basic and acidic residues predominate over residues 11–27 (LKQDRQKHRWSDSDYAR).

The protein belongs to the universal ribosomal protein uS12 family. In terms of assembly, part of the 30S ribosomal subunit.

Functionally, with S4 and S5 plays an important role in translational accuracy. Located at the interface of the 30S and 50S subunits. In Natronomonas pharaonis (strain ATCC 35678 / DSM 2160 / CIP 103997 / JCM 8858 / NBRC 14720 / NCIMB 2260 / Gabara) (Halobacterium pharaonis), this protein is Small ribosomal subunit protein uS12.